The primary structure comprises 341 residues: Dehydration-responsive element-binding protein 2C (341 aa).

A Nuclear localization signal motif is present at residues 8 to 48; that stretch reads RKRKSRGTRDVAEILRQWREYNEQIEAESCIDGGGPKSIRK. The interval 36-63 is disordered; that stretch reads SCIDGGGPKSIRKPPPKGSRKGCMKGKG. Positions 45-59 are enriched in basic residues; sequence SIRKPPPKGSRKGCM. Residues 71–128 constitute a DNA-binding region (AP2/ERF); it reads DYRGVRQRRWGKWVAEIREPDGGARLWLGTFSSSYEAALAYDEAAKAIYGQSARLNLP.

It belongs to the AP2/ERF transcription factor family. ERF subfamily.

Its subcellular location is the nucleus. In terms of biological role, transcriptional activator that binds specifically to the DNA sequence 5'-[AG]CCGAC-3'. Binding to the C-repeat/DRE element mediates high salinity- and abscisic acid-inducible transcription. The polypeptide is Dehydration-responsive element-binding protein 2C (DREB2C) (Arabidopsis thaliana (Mouse-ear cress)).